A 176-amino-acid chain; its full sequence is Cytochrome b (176 aa).

A run of 3 helical transmembrane segments spans residues 33 to 53, 77 to 98, and 113 to 133; these read FGSL…FLAM, WLLR…YLHI, and WNVG…GYVL. 2 residues coordinate heme b: H83 and H97.

Belongs to the cytochrome b family. The cytochrome bc1 complex contains 11 subunits: 3 respiratory subunits (MT-CYB, CYC1 and UQCRFS1), 2 core proteins (UQCRC1 and UQCRC2) and 6 low-molecular weight proteins (UQCRH/QCR6, UQCRB/QCR7, UQCRQ/QCR8, UQCR10/QCR9, UQCR11/QCR10 and a cleavage product of UQCRFS1). This cytochrome bc1 complex then forms a dimer. Heme b serves as cofactor.

It localises to the mitochondrion inner membrane. Component of the ubiquinol-cytochrome c reductase complex (complex III or cytochrome b-c1 complex) that is part of the mitochondrial respiratory chain. The b-c1 complex mediates electron transfer from ubiquinol to cytochrome c. Contributes to the generation of a proton gradient across the mitochondrial membrane that is then used for ATP synthesis. The protein is Cytochrome b (MT-CYB) of Eumops glaucinus (Wagner's mastiff bat).